The primary structure comprises 220 residues: Octanoyltransferase (220 aa).

The BPL/LPL catalytic domain maps to 34 to 209 (ENSQDEIWVV…TLSQELGLAN (176 aa)). Residues 73-80 (RGGQVTYH), 140-142 (SLG), and 153-155 (GLA) contribute to the substrate site. Cys171 (acyl-thioester intermediate) is an active-site residue.

Belongs to the LipB family.

It localises to the cytoplasm. It catalyses the reaction octanoyl-[ACP] + L-lysyl-[protein] = N(6)-octanoyl-L-lysyl-[protein] + holo-[ACP] + H(+). It functions in the pathway protein modification; protein lipoylation via endogenous pathway; protein N(6)-(lipoyl)lysine from octanoyl-[acyl-carrier-protein]: step 1/2. Catalyzes the transfer of endogenously produced octanoic acid from octanoyl-acyl-carrier-protein onto the lipoyl domains of lipoate-dependent enzymes. Lipoyl-ACP can also act as a substrate although octanoyl-ACP is likely to be the physiological substrate. This chain is Octanoyltransferase, found in Shewanella piezotolerans (strain WP3 / JCM 13877).